The chain runs to 519 residues: Maturase K (519 aa).

It belongs to the intron maturase 2 family. MatK subfamily.

The protein resides in the plastid. The protein localises to the chloroplast. In terms of biological role, usually encoded in the trnK tRNA gene intron. Probably assists in splicing its own and other chloroplast group II introns. The chain is Maturase K from Dioscorea elephantipes (Elephant's foot yam).